A 795-amino-acid chain; its full sequence is Phenylalanine--tRNA ligase beta subunit (795 aa).

The 110-residue stretch at 39–148 (AGTFNGVKVG…IDAPIGMDFR (110 aa)) folds into the tRNA-binding domain. The B5 domain maps to 401–476 (PKPNKVALRR…RIYGYDNIPN (76 aa)). 4 residues coordinate Mg(2+): D454, D460, E463, and E464. One can recognise an FDX-ACB domain in the interval 701-794 (SKFPANRRDI…VSEKFGASLR (94 aa)).

Belongs to the phenylalanyl-tRNA synthetase beta subunit family. Type 1 subfamily. In terms of assembly, tetramer of two alpha and two beta subunits. Mg(2+) serves as cofactor.

The protein resides in the cytoplasm. It carries out the reaction tRNA(Phe) + L-phenylalanine + ATP = L-phenylalanyl-tRNA(Phe) + AMP + diphosphate + H(+). This Vibrio vulnificus (strain CMCP6) protein is Phenylalanine--tRNA ligase beta subunit.